The following is a 438-amino-acid chain: EF-hand calcium-binding domain-containing protein 3 (438 aa).

2 consecutive EF-hand domains span residues 47 to 82 (SQMR…LGMN) and 83 to 118 (LTKH…KNRF). Ca(2+) contacts are provided by D96, D98, D100, K102, and D107. Y279 carries the post-translational modification Phosphotyrosine. The interval 413–438 (SSSDISECDTDTGRKRKRKGFKGFRQ) is disordered. Residues 426–438 (RKRKRKGFKGFRQ) show a composition bias toward basic residues.

This Bos taurus (Bovine) protein is EF-hand calcium-binding domain-containing protein 3 (EFCAB3).